Reading from the N-terminus, the 172-residue chain is Peptide methionine sulfoxide reductase MsrA 1 (172 aa).

The active site involves C14.

The protein belongs to the MsrA Met sulfoxide reductase family.

It catalyses the reaction L-methionyl-[protein] + [thioredoxin]-disulfide + H2O = L-methionyl-(S)-S-oxide-[protein] + [thioredoxin]-dithiol. The enzyme catalyses [thioredoxin]-disulfide + L-methionine + H2O = L-methionine (S)-S-oxide + [thioredoxin]-dithiol. Functionally, has an important function as a repair enzyme for proteins that have been inactivated by oxidation. Catalyzes the reversible oxidation-reduction of methionine sulfoxide in proteins to methionine. This Mesorhizobium japonicum (strain LMG 29417 / CECT 9101 / MAFF 303099) (Mesorhizobium loti (strain MAFF 303099)) protein is Peptide methionine sulfoxide reductase MsrA 1 (msrA1).